Reading from the N-terminus, the 856-residue chain is DNA mismatch repair protein MutS (856 aa).

607–614 provides a ligand contact to ATP; the sequence is GPNMSGKS.

This sequence belongs to the DNA mismatch repair MutS family.

This protein is involved in the repair of mismatches in DNA. It is possible that it carries out the mismatch recognition step. This protein has a weak ATPase activity. This is DNA mismatch repair protein MutS from Lactobacillus delbrueckii subsp. bulgaricus (strain ATCC BAA-365 / Lb-18).